We begin with the raw amino-acid sequence, 336 residues long: Dihydroorotate dehydrogenase (quinone) (336 aa).

FMN is bound by residues 62-66 (AGLDK) and threonine 86. Lysine 66 is a substrate binding site. 111–115 (NRMGF) lines the substrate pocket. FMN-binding residues include asparagine 139 and asparagine 172. Asparagine 172 is a substrate binding site. Serine 175 functions as the Nucleophile in the catalytic mechanism. Asparagine 177 lines the substrate pocket. FMN contacts are provided by lysine 217 and threonine 245. Residue 246-247 (NT) participates in substrate binding. Residues glycine 268, glycine 297, and 318 to 319 (YS) each bind FMN.

It belongs to the dihydroorotate dehydrogenase family. Type 2 subfamily. As to quaternary structure, monomer. Requires FMN as cofactor.

The protein localises to the cell membrane. It catalyses the reaction (S)-dihydroorotate + a quinone = orotate + a quinol. The protein operates within pyrimidine metabolism; UMP biosynthesis via de novo pathway; orotate from (S)-dihydroorotate (quinone route): step 1/1. Its function is as follows. Catalyzes the conversion of dihydroorotate to orotate with quinone as electron acceptor. The chain is Dihydroorotate dehydrogenase (quinone) from Pectobacterium carotovorum subsp. carotovorum (strain PC1).